The primary structure comprises 58 residues: MESIFLHANITIIPHSVLYVSLSYYIINPCVSVSTNLDDYFSSFVSSSNTVYDNILVT.

The helical transmembrane segment at 5-27 threads the bilayer; it reads FLHANITIIPHSVLYVSLSYYII.

It is found in the membrane. This is an uncharacterized protein from Saccharomyces cerevisiae (strain ATCC 204508 / S288c) (Baker's yeast).